The sequence spans 145 residues: Peptide methionine sulfoxide reductase MsrB (145 aa).

Residues 6–129 (KNERLQQLTD…NSAALRFIPV (124 aa)) form the MsrB domain. Cys118 functions as the Nucleophile in the catalytic mechanism.

This sequence belongs to the MsrB Met sulfoxide reductase family.

It catalyses the reaction L-methionyl-[protein] + [thioredoxin]-disulfide + H2O = L-methionyl-(R)-S-oxide-[protein] + [thioredoxin]-dithiol. The polypeptide is Peptide methionine sulfoxide reductase MsrB (Listeria monocytogenes serotype 4b (strain CLIP80459)).